Reading from the N-terminus, the 349-residue chain is Flagellar P-ring protein (349 aa).

Residues 1-16 form the signal peptide; sequence MKYFFIIALLLSSLYS.

It belongs to the FlgI family. The basal body constitutes a major portion of the flagellar organelle and consists of four rings (L,P,S, and M) mounted on a central rod.

Its subcellular location is the periplasm. The protein localises to the bacterial flagellum basal body. In terms of biological role, assembles around the rod to form the L-ring and probably protects the motor/basal body from shearing forces during rotation. This chain is Flagellar P-ring protein, found in Aliarcobacter butzleri (strain RM4018) (Arcobacter butzleri).